The following is a 119-amino-acid chain: MVKLNFSRELRLLTPIQFKNVFEQPFRASTPEITILARKNNLEHPRLGLTVAKKHLKRAHERNRIKRLVRESFRLSQHRLPAYDFVFVAKNGIGKLDNSAFAQILEKLWQRHIRLAQKS.

This sequence belongs to the RnpA family. Consists of a catalytic RNA component (M1 or rnpB) and a protein subunit.

It carries out the reaction Endonucleolytic cleavage of RNA, removing 5'-extranucleotides from tRNA precursor.. Functionally, RNaseP catalyzes the removal of the 5'-leader sequence from pre-tRNA to produce the mature 5'-terminus. It can also cleave other RNA substrates such as 4.5S RNA. The protein component plays an auxiliary but essential role in vivo by binding to the 5'-leader sequence and broadening the substrate specificity of the ribozyme. This Haemophilus influenzae (strain 86-028NP) protein is Ribonuclease P protein component.